The sequence spans 145 residues: Large ribosomal subunit protein uL16 (145 aa).

Residues 1–21 (MLVPTRVKHRKQHRGRMHGKA) are compositionally biased toward basic residues. Residues 1 to 22 (MLVPTRVKHRKQHRGRMHGKAT) are disordered.

Belongs to the universal ribosomal protein uL16 family. Part of the 50S ribosomal subunit.

Binds 23S rRNA and is also seen to make contacts with the A and possibly P site tRNAs. The sequence is that of Large ribosomal subunit protein uL16 from Desulfitobacterium hafniense (strain Y51).